Here is a 660-residue protein sequence, read N- to C-terminus: DNA mismatch repair protein MutL (660 aa).

The segment at 414 to 433 (SSVKHASRPQNTFTETDHPN) is disordered.

This sequence belongs to the DNA mismatch repair MutL/HexB family.

In terms of biological role, this protein is involved in the repair of mismatches in DNA. It is required for dam-dependent methyl-directed DNA mismatch repair. May act as a 'molecular matchmaker', a protein that promotes the formation of a stable complex between two or more DNA-binding proteins in an ATP-dependent manner without itself being part of a final effector complex. This chain is DNA mismatch repair protein MutL, found in Streptococcus pyogenes serotype M5 (strain Manfredo).